A 359-amino-acid polypeptide reads, in one-letter code: Ribosomal RNA large subunit methyltransferase M (359 aa).

S-adenosyl-L-methionine is bound by residues Ser186, 219 to 222, Asp238, Asp258, and Asp275; that span reads CPGG. The Proton acceptor role is filled by Lys304.

The protein belongs to the class I-like SAM-binding methyltransferase superfamily. RNA methyltransferase RlmE family. RlmM subfamily. As to quaternary structure, monomer.

It localises to the cytoplasm. The catalysed reaction is cytidine(2498) in 23S rRNA + S-adenosyl-L-methionine = 2'-O-methylcytidine(2498) in 23S rRNA + S-adenosyl-L-homocysteine + H(+). Its function is as follows. Catalyzes the 2'-O-methylation at nucleotide C2498 in 23S rRNA. This is Ribosomal RNA large subunit methyltransferase M from Vibrio vulnificus (strain YJ016).